Here is a 214-residue protein sequence, read N- to C-terminus: ATP phosphoribosyltransferase (214 aa).

It belongs to the ATP phosphoribosyltransferase family. Short subfamily. As to quaternary structure, heteromultimer composed of HisG and HisZ subunits.

Its subcellular location is the cytoplasm. The enzyme catalyses 1-(5-phospho-beta-D-ribosyl)-ATP + diphosphate = 5-phospho-alpha-D-ribose 1-diphosphate + ATP. It functions in the pathway amino-acid biosynthesis; L-histidine biosynthesis; L-histidine from 5-phospho-alpha-D-ribose 1-diphosphate: step 1/9. Functionally, catalyzes the condensation of ATP and 5-phosphoribose 1-diphosphate to form N'-(5'-phosphoribosyl)-ATP (PR-ATP). Has a crucial role in the pathway because the rate of histidine biosynthesis seems to be controlled primarily by regulation of HisG enzymatic activity. The chain is ATP phosphoribosyltransferase from Marinobacter nauticus (strain ATCC 700491 / DSM 11845 / VT8) (Marinobacter aquaeolei).